Reading from the N-terminus, the 704-residue chain is PHD finger protein MALE MEIOCYTE DEATH 1 (704 aa).

The PHD-type zinc-finger motif lies at 606-656 (MVKCICRARDDDGERMISCDVCEVWQHTRCCGIDDSDTLPPLFVCSNCCEE). Zn(2+)-binding residues include Cys609, Cys611, Cys624, Cys627, His632, Cys635, Cys650, and Cys653.

Interacts with JMJ16 in the nucleus of male meiocytes, especially on pachytene chromosomes. Expressed in inflorescence, specifically in male meiocytes.

The protein localises to the nucleus. Probable transcription factor required for chromosome organization and progression during male meiosis (e.g. microsporogenesis). Necessary for fertility and meiotic progressive compaction of prophase I chromosomes to metaphase I bivalents. Together with JMJ16, promotes gene expression in male meiocytes in an H3K9me3-dependent manner, and contributes to meiotic chromosome condensation by triggering some condensin promoters (e.g. CAP-D3 and CAP-H). The protein is PHD finger protein MALE MEIOCYTE DEATH 1 of Arabidopsis thaliana (Mouse-ear cress).